The primary structure comprises 258 residues: D-beta-hydroxybutyrate dehydrogenase (258 aa).

8–32 contacts NAD(+); that stretch reads LVTGSTSGIGLGIAKALAAQGANII. S140 serves as a coordination point for substrate. Y153 (proton acceptor) is an active-site residue.

It belongs to the short-chain dehydrogenases/reductases (SDR) family.

It carries out the reaction (R)-3-hydroxybutanoate + NAD(+) = acetoacetate + NADH + H(+). The protein is D-beta-hydroxybutyrate dehydrogenase (hbdH1) of Cupriavidus necator (strain ATCC 17699 / DSM 428 / KCTC 22496 / NCIMB 10442 / H16 / Stanier 337) (Ralstonia eutropha).